Here is a 333-residue protein sequence, read N- to C-terminus: Acetyl-coenzyme A carboxylase carboxyl transferase subunit alpha (333 aa).

The 261-residue stretch at 48-308 (ALEVKVETLR…KEMLIEELRI (261 aa)) folds into the CoA carboxyltransferase C-terminal domain.

Belongs to the AccA family. As to quaternary structure, acetyl-CoA carboxylase is a heterohexamer composed of biotin carboxyl carrier protein (AccB), biotin carboxylase (AccC) and two subunits each of ACCase subunit alpha (AccA) and ACCase subunit beta (AccD).

The protein localises to the cytoplasm. The catalysed reaction is N(6)-carboxybiotinyl-L-lysyl-[protein] + acetyl-CoA = N(6)-biotinyl-L-lysyl-[protein] + malonyl-CoA. It participates in lipid metabolism; malonyl-CoA biosynthesis; malonyl-CoA from acetyl-CoA: step 1/1. Component of the acetyl coenzyme A carboxylase (ACC) complex. First, biotin carboxylase catalyzes the carboxylation of biotin on its carrier protein (BCCP) and then the CO(2) group is transferred by the carboxyltransferase to acetyl-CoA to form malonyl-CoA. This is Acetyl-coenzyme A carboxylase carboxyl transferase subunit alpha from Chlorobium phaeobacteroides (strain DSM 266 / SMG 266 / 2430).